Reading from the N-terminus, the 339-residue chain is Probable cytosolic iron-sulfur protein assembly protein CIAO1 (339 aa).

7 WD repeats span residues 14-53 (HPDS…WICK), 59-98 (GHQR…FECV), 103-142 (GHEN…EYEC), 148-187 (SHTQ…WVCC), 192-231 (GHES…NEQG), 250-289 (FHTR…DPQQ), and 301-339 (AHSQ…PAGL). The short motif at 176–178 (LYQ) is the LYR motif; required for interaction with HSC20 element.

The protein belongs to the WD repeat CIA1 family. Component of the CIA complex. Interacts with CIAO2A and forms a complex with CIAO2B and MMS19; the interactions with CIAO2A and CIAO2B are mutually exclusive. Interacts with CHD1L, ERCC2, IREB2 and POLD1. Component of the MMXD complex, which includes CIAO1, ERCC2, CIAO2B, MMS19 and SLC25A5. Interacts with WT1. Interacts with CIAO3. Interacts (via LYR motif) with HSC20.

The protein localises to the cytoplasm. Key component of the cytosolic iron-sulfur protein assembly (CIA) complex, a multiprotein complex that mediates the incorporation of iron-sulfur cluster into extramitochondrial Fe/S proteins. As a CIA complex component, interacts specifically with CIAO2A or CIAO2B and MMS19 to assist different branches of iron-sulfur protein assembly, depending of its interactors. The complex CIAO1:CIAO2B:MMS19 binds to and facilitates the assembly of most cytosolic-nuclear Fe/S proteins. CIAO1:CIAO2A specifically matures ACO1 and stabilizes IREB2. Seems to specifically modulate the transactivation activity of WT1. As part of the mitotic spindle-associated MMXD complex it may play a role in chromosome segregation. The sequence is that of Probable cytosolic iron-sulfur protein assembly protein CIAO1 from Mus musculus (Mouse).